We begin with the raw amino-acid sequence, 353 residues long: Phosphate acyltransferase (353 aa).

This sequence belongs to the PlsX family. Homodimer. Probably interacts with PlsY.

It is found in the cytoplasm. It catalyses the reaction a fatty acyl-[ACP] + phosphate = an acyl phosphate + holo-[ACP]. It functions in the pathway lipid metabolism; phospholipid metabolism. Its function is as follows. Catalyzes the reversible formation of acyl-phosphate (acyl-PO(4)) from acyl-[acyl-carrier-protein] (acyl-ACP). This enzyme utilizes acyl-ACP as fatty acyl donor, but not acyl-CoA. This Myxococcus xanthus (strain DK1622) protein is Phosphate acyltransferase.